A 127-amino-acid chain; its full sequence is Aspartate 1-decarboxylase (127 aa).

The active-site Schiff-base intermediate with substrate; via pyruvic acid is Ser25. The residue at position 25 (Ser25) is a Pyruvic acid (Ser). Thr57 lines the substrate pocket. Tyr58 functions as the Proton donor in the catalytic mechanism. A substrate-binding site is contributed by 73–75 (GAA).

The protein belongs to the PanD family. In terms of assembly, heterooctamer of four alpha and four beta subunits. Requires pyruvate as cofactor. Is synthesized initially as an inactive proenzyme, which is activated by self-cleavage at a specific serine bond to produce a beta-subunit with a hydroxyl group at its C-terminus and an alpha-subunit with a pyruvoyl group at its N-terminus.

It is found in the cytoplasm. It carries out the reaction L-aspartate + H(+) = beta-alanine + CO2. It functions in the pathway cofactor biosynthesis; (R)-pantothenate biosynthesis; beta-alanine from L-aspartate: step 1/1. Its function is as follows. Catalyzes the pyruvoyl-dependent decarboxylation of aspartate to produce beta-alanine. The sequence is that of Aspartate 1-decarboxylase from Geobacillus sp. (strain WCH70).